The following is a 183-amino-acid chain: Microfibrillar-associated protein 2 (183 aa).

Positions 1–16 form a signal peptide, or 18; that stretch reads MRAACLFLLFMPGLLA. Gln-17 is subject to Pyrrolidone carboxylic acid. A sulfotyrosine mark is found at Tyr-46, Tyr-47, and Tyr-49. The tract at residues 52–92 is disordered; that stretch reads VSPRTPEEQFQSQQQVQQEVIPAPTPEPAAAGDLETEPTEP. Residues 59–70 are compositionally biased toward low complexity; it reads EQFQSQQQVQQE. The ShKT domain occupies 153–183; that stretch reads CRDKFSKCGVMAVSGLCQSVAASCARSCGGC. 3 cysteine pairs are disulfide-bonded: Cys-153-Cys-183, Cys-160-Cys-176, and Cys-169-Cys-180.

It belongs to the MFAP family. Forms a ternary complex with BGN and ELN. Interacts with FBN1 (via N-terminal domain) and FBN2. Forms intermolecular disulfide bonds either with other MAGP-1 molecules or with other components of the microfibrils. May form transglutaminase cross-links. In terms of processing, O-glycosylated.

Its subcellular location is the secreted. It is found in the extracellular space. The protein localises to the extracellular matrix. Component of the elastin-associated microfibrils. In Mus musculus (Mouse), this protein is Microfibrillar-associated protein 2 (Mfap2).